We begin with the raw amino-acid sequence, 790 residues long: Mitochondrial intermediate peptidase (790 aa).

Residues 1 to 29 (MLKRLARNNSSPWICSRCLQQSQRQRRFN) constitute a mitochondrion transit peptide. Residue His-570 coordinates Zn(2+). Glu-571 is an active-site residue. Residues His-574 and His-577 each contribute to the Zn(2+) site.

The protein belongs to the peptidase M3 family. Zn(2+) is required as a cofactor.

Its subcellular location is the mitochondrion matrix. It catalyses the reaction Release of an N-terminal octapeptide as second stage of processing of some proteins imported into the mitochondrion.. Functionally, cleaves proteins, imported into the mitochondrion, to their mature size. While most mitochondrial precursor proteins are processed to the mature form in one step by mitochondrial processing peptidase (MPP), the sequential cleavage by MIP of an octapeptide after initial processing by MPP is a required step for a subgroup of nuclear-encoded precursor proteins destined for the matrix or the inner membrane. This Phaeosphaeria nodorum (strain SN15 / ATCC MYA-4574 / FGSC 10173) (Glume blotch fungus) protein is Mitochondrial intermediate peptidase (OCT1).